Consider the following 416-residue polypeptide: Calreticulin (416 aa).

The first 17 residues, 1–17 (MLLSVPLLLGLLGLAAA), serve as a signal peptide directing secretion. The interval 18–197 (DPAIYFKEQF…NSQVESGSLE (180 aa)) is N-domain. Ca(2+) is bound at residue Gln-26. Lys-48 carries the N6-acetyllysine modification. Residues Lys-62 and Lys-64 each contribute to the Ca(2+) site. Lys-64 bears the N6-(2-hydroxyisobutyryl)lysine mark. Cys-105 and Cys-137 are oxidised to a cystine. Residues Tyr-109, Lys-111, Tyr-128, and Asp-135 each coordinate an alpha-D-glucoside. At Lys-159 the chain carries N6-acetyllysine. A 1-1 repeat occupies 191–202 (VESGSLEDDWDF). The segment at 191–255 (VESGSLEDDW…DAKKPEDWDE (65 aa)) is 4 X approximate repeats. Residues 193 to 277 (SGSLEDDWDF…NPEYKGEWKP (85 aa)) are disordered. The P-domain stretch occupies residues 198–308 (DDWDFLPPKK…YSPDANIYAY (111 aa)). Residues 207-251 (KIKDPDAAKPEDWDERAKIDDPTDSKPEDWDKPEHIPDPDAKKPE) show a composition bias toward basic and acidic residues. Residue Lys-209 is modified to N6-acetyllysine. Tandem repeats lie at residues 210–221 (DPDAAKPEDWDE), 227–238 (DPTDSKPEDWDK), 244–255 (DPDAKKPEDWDE), 259–269 (GEWEPPVIQNP), 273–283 (GEWKPRQIDNP), and 287–297 (GTWIHPEIDNP). An interaction with PPIB region spans residues 237–270 (DKPEHIPDPDAKKPEDWDEEMDGEWEPPVIQNPE). Residues 252–261 (DWDEEMDGEW) show a composition bias toward acidic residues. The segment at 259 to 297 (GEWEPPVIQNPEYKGEWKPRQIDNPDYKGTWIHPEIDNP) is 3 X approximate repeats. The interval 309 to 416 (DSFAVLGLDL…ESPGQAKDEL (108 aa)) is C-domain. Asp-317 is an an alpha-D-glucoside binding site. A Ca(2+)-binding site is contributed by Asp-328. Residues 350 to 416 (TKAAEKQMKD…ESPGQAKDEL (67 aa)) are disordered. The span at 352–379 (AAEKQMKDKQDEEQRLKEEEEDKKRKEE) shows a compositional bias: basic and acidic residues. Acidic residues predominate over residues 380–408 (EEAEDKEDDDDRDEDEDEEDEKEEDEEES). Residues 413–416 (KDEL) carry the Prevents secretion from ER motif.

The protein belongs to the calreticulin family. Monomer. Interacts with GABARAP, NR3C1, PDIA3/ERp57 and TRIM21. Interacts (via P-domain) with PDIA5. Interacts with PPIB. Interacts with SPACA9. Component of an EIF2 complex at least composed of CELF1/CUGBP1, CALR, CALR3, EIF2S1, EIF2S2, HSP90B1 and HSPA5. Interacts with CLCC1.

Its subcellular location is the endoplasmic reticulum lumen. The protein localises to the cytoplasm. It localises to the cytosol. The protein resides in the cytolytic granule. It is found in the secreted. Its subcellular location is the extracellular space. The protein localises to the extracellular matrix. It localises to the cell surface. The protein resides in the sarcoplasmic reticulum lumen. It is found in the cytoplasmic vesicle. Its subcellular location is the secretory vesicle. The protein localises to the cortical granule. Calcium-binding chaperone that promotes folding, oligomeric assembly and quality control in the endoplasmic reticulum (ER) via the calreticulin/calnexin cycle. This lectin interacts transiently with almost all of the monoglucosylated glycoproteins that are synthesized in the ER. Interacts with the DNA-binding domain of NR3C1 and mediates its nuclear export. Involved in maternal gene expression regulation. May participate in oocyte maturation via the regulation of calcium homeostasis. Present in the cortical granules of non-activated oocytes, is exocytosed during the cortical reaction in response to oocyte activation and might participate in the block to polyspermy. This Mus musculus (Mouse) protein is Calreticulin (Calr).